The chain runs to 62 residues: UPF0434 protein R03186 (62 aa).

This sequence belongs to the UPF0434 family.

This Rhizobium meliloti (strain 1021) (Ensifer meliloti) protein is UPF0434 protein R03186.